Consider the following 415-residue polypeptide: Phosphoglycerate kinase (415 aa).

(2R)-3-phosphoglycerate contacts are provided by valine 23, aspartate 24, phenylalanine 25, asparagine 26, glutamine 39, arginine 40, serine 63, histidine 64, glycine 66, arginine 67, leucine 122, arginine 123, and arginine 170. An ADP-binding site is contributed by glycine 213. Glycine 213 provides a ligand contact to CDP. Residues alanine 214 and lysine 215 each contribute to the AMP site. Alanine 214 provides a ligand contact to ATP. Residue alanine 214 participates in Mg(2+) binding. Aspartate 218 is a binding site for CDP. Aspartate 218 serves as a coordination point for Mg(2+). Lysine 219 contacts AMP. An ATP-binding site is contributed by lysine 219. Glycine 237 contributes to the ADP binding site. Glycine 237 contacts CDP. Positions 238 and 311 each coordinate AMP. The ATP site is built by glycine 238 and glycine 311. Residues glycine 336 and phenylalanine 341 each contribute to the CDP site. Residue phenylalanine 341 participates in ADP binding. Glutamate 342 provides a ligand contact to AMP. Glutamate 342, aspartate 373, and threonine 374 together coordinate ATP. Aspartate 373 lines the Mg(2+) pocket.

The protein belongs to the phosphoglycerate kinase family. As to quaternary structure, monomer. It depends on Mg(2+) as a cofactor.

It localises to the cytoplasm. The protein resides in the mitochondrion. The enzyme catalyses (2R)-3-phosphoglycerate + ATP = (2R)-3-phospho-glyceroyl phosphate + ADP. It participates in carbohydrate degradation; glycolysis; pyruvate from D-glyceraldehyde 3-phosphate: step 2/5. Its function is as follows. Catalyzes one of the two ATP producing reactions in the glycolytic pathway via the reversible conversion of 1,3-diphosphoglycerate to 3-phosphoglycerate. Both L- and D- forms of purine and pyrimidine nucleotides can be used as substrates, but the activity is much lower on pyrimidines. Negatively regulates the biosynthesis of acetyl-CoA from pyruvate in the mitochondrion. The protein is Phosphoglycerate kinase (PGKA) of Penicillium chrysogenum (Penicillium notatum).